We begin with the raw amino-acid sequence, 140 residues long: Large ribosomal subunit protein uL15 (140 aa).

Residues 1–31 (MDTKKFRGSRTCGGGTHKNRRGAGNRGGRGK) form a disordered region.

It belongs to the universal ribosomal protein uL15 family. As to quaternary structure, part of the 50S ribosomal subunit.

Functionally, binds to the 23S rRNA. This is Large ribosomal subunit protein uL15 from Methanosarcina barkeri (strain Fusaro / DSM 804).